The primary structure comprises 466 residues: Argininosuccinate lyase (466 aa).

This sequence belongs to the lyase 1 family. Argininosuccinate lyase subfamily.

It localises to the cytoplasm. It carries out the reaction 2-(N(omega)-L-arginino)succinate = fumarate + L-arginine. Its pathway is amino-acid biosynthesis; L-arginine biosynthesis; L-arginine from L-ornithine and carbamoyl phosphate: step 3/3. In Microcystis aeruginosa (strain NIES-843 / IAM M-2473), this protein is Argininosuccinate lyase.